The primary structure comprises 371 residues: Poly(rC)-binding protein 3 (371 aa).

KH domains are found at residues 45–95 (TLTI…TITG), 129–182 (PVTL…TISG), and 293–357 (ASTH…QYLI).

The protein localises to the cytoplasm. In terms of biological role, single-stranded nucleic acid binding protein that binds preferentially to oligo dC. This is Poly(rC)-binding protein 3 from Homo sapiens (Human).